The following is a 192-amino-acid chain: MITISDAAQAHFVKLLADQPEGTHIRVFVISPGTSQAECGVSYCPPDAVESDDIEIEFTGFNAMVDEKSAPFLEDATIDFVTDQLGSQLTLKAPNAKMRKVSGDAPLVERIEYVIQSEINPQLAGHGGNIMLVEITKEGVAVLQFGGGCNGCSQVDITLKDGIEKQLLDMFPGELTGVRDVTDHQHGEHSYA.

Residues cysteine 149 and cysteine 152 each coordinate [4Fe-4S] cluster.

This sequence belongs to the NfuA family. Homodimer. It depends on [4Fe-4S] cluster as a cofactor.

Its function is as follows. Involved in iron-sulfur cluster biogenesis. Binds a 4Fe-4S cluster, can transfer this cluster to apoproteins, and thereby intervenes in the maturation of Fe/S proteins. Could also act as a scaffold/chaperone for damaged Fe/S proteins. This is Fe/S biogenesis protein NfuA from Shewanella baltica (strain OS223).